Consider the following 101-residue polypeptide: Large ribosomal subunit protein P1 (101 aa).

Residues 65-89 (AAPAAAPAEEPKEEKKEEKKEEDTT) form a disordered region. Basic and acidic residues predominate over residues 73–87 (EEPKEEKKEEKKEED).

The protein belongs to the eukaryotic ribosomal protein P1/P2 family. As to quaternary structure, part of the 50S ribosomal subunit. Homodimer, it forms part of the ribosomal stalk which helps the ribosome interact with GTP-bound translation factors. Forms a heptameric uL10/P0(P1)2(P1)2(P1)2 complex, where uL10/P0 forms an elongated spine to which the P1 dimers bind in a sequential fashion.

Functionally, forms part of the ribosomal stalk, playing a central role in the interaction of the ribosome with GTP-bound translation factors. The protein is Large ribosomal subunit protein P1 of Methanothermococcus thermolithotrophicus (Methanococcus thermolithotrophicus).